Reading from the N-terminus, the 221-residue chain is Octanoyltransferase (221 aa).

One can recognise a BPL/LPL catalytic domain in the interval 38–220 (GEIPDTLLLL…GFREVLGDPG (183 aa)). Residues 84-91 (RGGDATFH), 149-151 (AIG), and 163-165 (GFA) each bind substrate. Residue Cys181 is the Acyl-thioester intermediate of the active site.

The protein belongs to the LipB family.

It is found in the cytoplasm. The enzyme catalyses octanoyl-[ACP] + L-lysyl-[protein] = N(6)-octanoyl-L-lysyl-[protein] + holo-[ACP] + H(+). It participates in protein modification; protein lipoylation via endogenous pathway; protein N(6)-(lipoyl)lysine from octanoyl-[acyl-carrier-protein]: step 1/2. Functionally, catalyzes the transfer of endogenously produced octanoic acid from octanoyl-acyl-carrier-protein onto the lipoyl domains of lipoate-dependent enzymes. Lipoyl-ACP can also act as a substrate although octanoyl-ACP is likely to be the physiological substrate. The chain is Octanoyltransferase from Rubrobacter xylanophilus (strain DSM 9941 / JCM 11954 / NBRC 16129 / PRD-1).